A 536-amino-acid polypeptide reads, in one-letter code: CTP synthase (536 aa).

Residues 1 to 268 are amidoligase domain; the sequence is MSFKSIFLTG…VDFLLSKFGF (268 aa). Serine 14 is a CTP binding site. Residue serine 14 coordinates UTP. ATP is bound at residue 15-20; it reads SLGKGL. Tyrosine 55 is a binding site for L-glutamine. Aspartate 72 provides a ligand contact to ATP. Positions 72 and 142 each coordinate Mg(2+). CTP contacts are provided by residues 149 to 151, 188 to 193, and lysine 224; these read DIE and KTKPTQ. UTP-binding positions include 188–193 and lysine 224; that span reads KTKPTQ. Residues 294-532 form the Glutamine amidotransferase type-1 domain; the sequence is RIGLVGKYLE…LSAALDYSLE (239 aa). Glycine 353 lines the L-glutamine pocket. Cysteine 380 acts as the Nucleophile; for glutamine hydrolysis in catalysis. L-glutamine contacts are provided by residues 381–384, glutamate 404, and arginine 460; that span reads LGMQ. Catalysis depends on residues histidine 505 and glutamate 507.

Belongs to the CTP synthase family. In terms of assembly, homotetramer.

The enzyme catalyses UTP + L-glutamine + ATP + H2O = CTP + L-glutamate + ADP + phosphate + 2 H(+). It catalyses the reaction L-glutamine + H2O = L-glutamate + NH4(+). The catalysed reaction is UTP + NH4(+) + ATP = CTP + ADP + phosphate + 2 H(+). The protein operates within pyrimidine metabolism; CTP biosynthesis via de novo pathway; CTP from UDP: step 2/2. With respect to regulation, allosterically activated by GTP, when glutamine is the substrate; GTP has no effect on the reaction when ammonia is the substrate. The allosteric effector GTP functions by stabilizing the protein conformation that binds the tetrahedral intermediate(s) formed during glutamine hydrolysis. Inhibited by the product CTP, via allosteric rather than competitive inhibition. Functionally, catalyzes the ATP-dependent amination of UTP to CTP with either L-glutamine or ammonia as the source of nitrogen. Regulates intracellular CTP levels through interactions with the four ribonucleotide triphosphates. This Chlamydia muridarum (strain MoPn / Nigg) protein is CTP synthase.